The following is a 402-amino-acid chain: S-adenosylmethionine synthase (402 aa).

137-142 (GQGSAD) lines the ATP pocket.

It belongs to the AdoMet synthase 2 family. Requires Mg(2+) as cofactor.

The enzyme catalyses L-methionine + ATP + H2O = S-adenosyl-L-methionine + phosphate + diphosphate. It functions in the pathway amino-acid biosynthesis; S-adenosyl-L-methionine biosynthesis; S-adenosyl-L-methionine from L-methionine: step 1/1. In terms of biological role, catalyzes the formation of S-adenosylmethionine from methionine and ATP. This chain is S-adenosylmethionine synthase, found in Pyrobaculum islandicum (strain DSM 4184 / JCM 9189 / GEO3).